The sequence spans 52 residues: UPF0391 membrane protein XCV0245 (52 aa).

The next 2 helical transmembrane spans lie at 5–25 (AIIF…GIAG) and 27–47 (ATNI…ISMF).

This sequence belongs to the UPF0391 family.

It is found in the cell membrane. The chain is UPF0391 membrane protein XCV0245 from Xanthomonas euvesicatoria pv. vesicatoria (strain 85-10) (Xanthomonas campestris pv. vesicatoria).